A 610-amino-acid chain; its full sequence is Cytosolic 5'-nucleotidase 1B (610 aa).

Disordered regions lie at residues 1-34 (MSQT…DKTG) and 101-277 (GSQE…DEDD). Basic and acidic residues predominate over residues 9–34 (KKNEPGMRSSKESLEAEKRKESDKTG). Polar residues predominate over residues 119–132 (SQWSRISRSPSTKA). Low complexity predominate over residues 148–166 (PSSSTSSRTPSTSPSLHDS). Over residues 167–183 (SPPPLSGQPSLQPPASP) the composition is skewed to pro residues. Over residues 236–265 (SRTSPTEWKSSSQRRGIYPASTQLDRNSLS) the composition is skewed to polar residues. Asp467 functions as the Nucleophile in the catalytic mechanism.

Belongs to the 5'-nucleotidase type 3 family. Mg(2+) serves as cofactor. As to expression, highly expressed in testis, placenta and pancreas. Detected at lower levels in heart, kidney, liver and lung.

It is found in the cytoplasm. The enzyme catalyses a ribonucleoside 5'-phosphate + H2O = a ribonucleoside + phosphate. It carries out the reaction AMP + H2O = adenosine + phosphate. Activated by ADP. In terms of biological role, catalyzes the hydrolysis of nucleotide monophosphates, releasing inorganic phosphate and the corresponding nucleoside, AMP is the major substrate. The polypeptide is Cytosolic 5'-nucleotidase 1B (NT5C1B) (Homo sapiens (Human)).